The chain runs to 585 residues: Arginine--tRNA ligase (585 aa).

The short motif at 131–141 (ANPTGPMHVGH) is the 'HIGH' region element.

This sequence belongs to the class-I aminoacyl-tRNA synthetase family. As to quaternary structure, monomer.

Its subcellular location is the cytoplasm. It carries out the reaction tRNA(Arg) + L-arginine + ATP = L-arginyl-tRNA(Arg) + AMP + diphosphate. The polypeptide is Arginine--tRNA ligase (Bartonella henselae (strain ATCC 49882 / DSM 28221 / CCUG 30454 / Houston 1) (Rochalimaea henselae)).